We begin with the raw amino-acid sequence, 124 residues long: Small ribosomal subunit protein uS12 (124 aa).

The segment at 1 to 24 (MPTISQLVRKGRAKITKKSKSAAL) is disordered. Residues 9–20 (RKGRAKITKKSK) are compositionally biased toward basic residues. Asp89 bears the 3-methylthioaspartic acid mark. A disordered region spans residues 105-124 (AGVEGRTQRRSKYGAKRPKK). Residues 112 to 124 (QRRSKYGAKRPKK) show a composition bias toward basic residues.

The protein belongs to the universal ribosomal protein uS12 family. In terms of assembly, part of the 30S ribosomal subunit. Contacts proteins S8 and S17. May interact with IF1 in the 30S initiation complex.

With S4 and S5 plays an important role in translational accuracy. Functionally, interacts with and stabilizes bases of the 16S rRNA that are involved in tRNA selection in the A site and with the mRNA backbone. Located at the interface of the 30S and 50S subunits, it traverses the body of the 30S subunit contacting proteins on the other side and probably holding the rRNA structure together. The combined cluster of proteins S8, S12 and S17 appears to hold together the shoulder and platform of the 30S subunit. In Christiangramia forsetii (strain DSM 17595 / CGMCC 1.15422 / KT0803) (Gramella forsetii), this protein is Small ribosomal subunit protein uS12.